The following is a 363-amino-acid chain: Zinc finger protein 830 (363 aa).

An N-acetylalanine modification is found at alanine 2. Residues 16–40 (VNQEELRRLMREKQRLSTNRKRIES) adopt a coiled-coil conformation. The segment at 53-75 (CALCNTPVKSELLWQTHVLGKQH) adopts a C2H2-type zinc-finger fold. The segment at 81–213 (ELKGAKGATQ…NPPKAPLVPH (133 aa)) is disordered. A compositionally biased stretch (polar residues) spans 90-99 (QGPSTGTVPQ). The span at 104-115 (RATDVESQDAKK) shows a compositional bias: basic and acidic residues. A compositionally biased stretch (low complexity) spans 129 to 143 (SASSANLDAARAAPS). Acidic residues predominate over residues 152–164 (DYDDEEEEEEEGG). Residues 165–184 (GEERRDSSKHLPDAQGKEHS) show a composition bias toward basic and acidic residues. Over residues 189–205 (RETTSNVLPNDPFNTNP) the composition is skewed to polar residues. The residue at position 216 (serine 216) is a Phosphoserine. A coiled-coil region spans residues 303-331 (IECYRRVEKLRNRQDEIKNKLKEVLTIKE). Phosphoserine occurs at positions 342 and 353.

Component of the XAB2 complex, a multimeric protein complex composed of XAB2, PRPF19, AQR, ZNF830, ISY1, and PPIE; this complex binds preferentially to RNA. Interacts with XAB2. Identified in a pentameric intron-binding (IB) complex composed of AQR, XAB2, ISY1, ZNF830 and PPIE that is incorporated into the spliceosome as a preassembled complex. The IB complex does not contain PRPF19. Post-translationally, phosphorylated in response to DNA damage by the cell cycle checkpoint kinases ATR/ATM. Widely expressed at low level. Expressed in oocytes from primordial to antral follicles. Also detected in somatic cells of the ovary, namely, in granulosa cells from the pre-antral follicle stage onward.

It is found in the nucleus. It localises to the chromosome. The protein localises to the nucleus speckle. Its function is as follows. May play a role in pre-mRNA splicing as component of the spliceosome. Acts as an important regulator of the cell cycle that participates in the maintenance of genome integrity. During cell cycle progression in embryonic fibroblast, prevents replication fork collapse, double-strand break formation and cell cycle checkpoint activation. Controls mitotic cell cycle progression and cell survival in rapidly proliferating intestinal epithelium and embryonic stem cells. During the embryo preimplantation, controls different aspects of M phase. During early oocyte growth, plays a role in oocyte survival by preventing chromosomal breaks formation, activation of TP63 and reduction of transcription. The protein is Zinc finger protein 830 of Mus musculus (Mouse).